Here is a 407-residue protein sequence, read N- to C-terminus: Phosphopentomutase (407 aa).

Mn(2+) contacts are provided by Asp-10, Asp-306, His-311, Asp-347, His-348, and His-359.

This sequence belongs to the phosphopentomutase family. Requires Mn(2+) as cofactor.

It is found in the cytoplasm. It catalyses the reaction 2-deoxy-alpha-D-ribose 1-phosphate = 2-deoxy-D-ribose 5-phosphate. The enzyme catalyses alpha-D-ribose 1-phosphate = D-ribose 5-phosphate. The protein operates within carbohydrate degradation; 2-deoxy-D-ribose 1-phosphate degradation; D-glyceraldehyde 3-phosphate and acetaldehyde from 2-deoxy-alpha-D-ribose 1-phosphate: step 1/2. Its function is as follows. Isomerase that catalyzes the conversion of deoxy-ribose 1-phosphate (dRib-1-P) and ribose 1-phosphate (Rib-1-P) to deoxy-ribose 5-phosphate (dRib-5-P) and ribose 5-phosphate (Rib-5-P), respectively. This chain is Phosphopentomutase, found in Serratia proteamaculans (strain 568).